Consider the following 589-residue polypeptide: PTS system mannitol-specific EIICB component (589 aa).

Residues 1-25 (MERKSSLKVRVQKLGTSLSNMVMPN) are Cytoplasmic-facing. The 334-residue stretch at 14 to 347 (LGTSLSNMVM…ILKSDNSDDD (334 aa)) folds into the PTS EIIC type-2 domain. A helical membrane pass occupies residues 26–47 (IGAFIAWGVAASLFIATGYLPN). Residues 48 to 51 (KALD) are Extracellular-facing. Residues 52–73 (TNVVGPMLKYVLPLLIGYTGGY) form a helical membrane-spanning segment. Topologically, residues 74-136 (NIHKQRGGVI…TGFEMLVNNF (63 aa)) are cytoplasmic. Residues 137–158 (SLGLIGFALMVLAFFVIGPVVA) form a helical membrane-spanning segment. The Extracellular segment spans residues 159–167 (QLTEWVGIG). A helical membrane pass occupies residues 168–188 (VEAIVKVHLLPLANLIIEPAK). At 189-275 (ILFLNNALNH…VMMKPAMFLA (87 aa)) the chain is on the cytoplasmic side. The chain crosses the membrane as a helical span at residues 276-295 (VIAGGLTGTFTFQTLGAGLT). Residues 296–317 (APASPGSIIAIMGMSPKGWGPH) lie on the Extracellular side of the membrane. Residues 318–339 (LVVLAGVFAAAVASFLVASIIL) form a helical membrane-spanning segment. Residues 340–589 (KSDNSDDDSL…YDKLVARMHK (250 aa)) are Cytoplasmic-facing. A PTS EIIB type-2 domain is found at 383–478 (HQIIFACDAG…SLTNGKASGS (96 aa)). Cysteine 389 serves as the catalytic Phosphocysteine intermediate; for EIIB activity. The residue at position 389 (cysteine 389) is a Phosphocysteine; by EIIA.

As to quaternary structure, homodimer.

It localises to the cell membrane. It carries out the reaction D-mannitol(out) + N(pros)-phospho-L-histidyl-[protein] = D-mannitol 1-phosphate(in) + L-histidyl-[protein]. Its function is as follows. The phosphoenolpyruvate-dependent sugar phosphotransferase system (sugar PTS), a major carbohydrate active transport system, catalyzes the phosphorylation of incoming sugar substrates concomitantly with their translocation across the cell membrane. The enzyme II CmtAB PTS system is involved in D-mannitol transport. In Streptococcus mutans serotype c (strain ATCC 700610 / UA159), this protein is PTS system mannitol-specific EIICB component.